We begin with the raw amino-acid sequence, 439 residues long: UDP-N-acetylmuramoylalanine--D-glutamate ligase (439 aa).

112-118 lines the ATP pocket; that stretch reads GSNGKST.

This sequence belongs to the MurCDEF family.

Its subcellular location is the cytoplasm. The catalysed reaction is UDP-N-acetyl-alpha-D-muramoyl-L-alanine + D-glutamate + ATP = UDP-N-acetyl-alpha-D-muramoyl-L-alanyl-D-glutamate + ADP + phosphate + H(+). It functions in the pathway cell wall biogenesis; peptidoglycan biosynthesis. In terms of biological role, cell wall formation. Catalyzes the addition of glutamate to the nucleotide precursor UDP-N-acetylmuramoyl-L-alanine (UMA). The sequence is that of UDP-N-acetylmuramoylalanine--D-glutamate ligase from Mannheimia succiniciproducens (strain KCTC 0769BP / MBEL55E).